A 212-amino-acid polypeptide reads, in one-letter code: Cell division protein SepF (212 aa).

The interval 32–104 (RYADPDTSYD…APLGSDAHRE (73 aa)) is disordered. Over residues 64–73 (EAEEDGGDYG) the composition is skewed to acidic residues.

It belongs to the SepF family. Homodimer. Interacts with FtsZ.

It localises to the cytoplasm. Cell division protein that is part of the divisome complex and is recruited early to the Z-ring. Probably stimulates Z-ring formation, perhaps through the cross-linking of FtsZ protofilaments. Its function overlaps with FtsA. The protein is Cell division protein SepF of Saccharopolyspora erythraea (strain ATCC 11635 / DSM 40517 / JCM 4748 / NBRC 13426 / NCIMB 8594 / NRRL 2338).